The following is a 156-amino-acid chain: Crossover junction endodeoxyribonuclease RuvC (156 aa).

Catalysis depends on residues aspartate 7, glutamate 67, and aspartate 139. Aspartate 7, glutamate 67, and aspartate 139 together coordinate Mg(2+).

The protein belongs to the RuvC family. In terms of assembly, homodimer which binds Holliday junction (HJ) DNA. The HJ becomes 2-fold symmetrical on binding to RuvC with unstacked arms; it has a different conformation from HJ DNA in complex with RuvA. In the full resolvosome a probable DNA-RuvA(4)-RuvB(12)-RuvC(2) complex forms which resolves the HJ. The cofactor is Mg(2+).

It localises to the cytoplasm. It catalyses the reaction Endonucleolytic cleavage at a junction such as a reciprocal single-stranded crossover between two homologous DNA duplexes (Holliday junction).. Its function is as follows. The RuvA-RuvB-RuvC complex processes Holliday junction (HJ) DNA during genetic recombination and DNA repair. Endonuclease that resolves HJ intermediates. Cleaves cruciform DNA by making single-stranded nicks across the HJ at symmetrical positions within the homologous arms, yielding a 5'-phosphate and a 3'-hydroxyl group; requires a central core of homology in the junction. The consensus cleavage sequence is 5'-(A/T)TT(C/G)-3'. Cleavage occurs on the 3'-side of the TT dinucleotide at the point of strand exchange. HJ branch migration catalyzed by RuvA-RuvB allows RuvC to scan DNA until it finds its consensus sequence, where it cleaves and resolves the cruciform DNA. The polypeptide is Crossover junction endodeoxyribonuclease RuvC (Sphingopyxis alaskensis (strain DSM 13593 / LMG 18877 / RB2256) (Sphingomonas alaskensis)).